Here is a 99-residue protein sequence, read N- to C-terminus: Small ribosomal subunit protein bS20 (99 aa).

This sequence belongs to the bacterial ribosomal protein bS20 family.

Functionally, binds directly to 16S ribosomal RNA. The protein is Small ribosomal subunit protein bS20 of Cyanothece sp. (strain PCC 7425 / ATCC 29141).